The following is a 254-amino-acid chain: Cell division protein ZapD (254 aa).

It belongs to the ZapD family. Interacts with FtsZ.

The protein resides in the cytoplasm. Functionally, cell division factor that enhances FtsZ-ring assembly. Directly interacts with FtsZ and promotes bundling of FtsZ protofilaments, with a reduction in FtsZ GTPase activity. This Idiomarina loihiensis (strain ATCC BAA-735 / DSM 15497 / L2-TR) protein is Cell division protein ZapD.